A 202-amino-acid polypeptide reads, in one-letter code: Phosphoenolpyruvate guanylyltransferase (202 aa).

Positions 140, 156, and 159 each coordinate phosphoenolpyruvate.

This sequence belongs to the CofC family.

It carries out the reaction phosphoenolpyruvate + GTP + H(+) = enolpyruvoyl-2-diphospho-5'-guanosine + diphosphate. Its pathway is cofactor biosynthesis; coenzyme F420 biosynthesis. Its function is as follows. Guanylyltransferase that catalyzes the activation of phosphoenolpyruvate (PEP) as enolpyruvoyl-2-diphospho-5'-guanosine, via the condensation of PEP with GTP. It is involved in the biosynthesis of coenzyme F420, a hydride carrier cofactor. This chain is Phosphoenolpyruvate guanylyltransferase, found in Chloroflexus aggregans (strain MD-66 / DSM 9485).